We begin with the raw amino-acid sequence, 174 residues long: Ribosome maturation factor RimM (174 aa).

In terms of domain architecture, PRC barrel spans 97 to 171 (EGYYYDFDII…RMVIDPIPGL (75 aa)).

The protein belongs to the RimM family. Binds ribosomal protein uS19.

It localises to the cytoplasm. Functionally, an accessory protein needed during the final step in the assembly of 30S ribosomal subunit, possibly for assembly of the head region. Essential for efficient processing of 16S rRNA. May be needed both before and after RbfA during the maturation of 16S rRNA. It has affinity for free ribosomal 30S subunits but not for 70S ribosomes. The chain is Ribosome maturation factor RimM from Symbiobacterium thermophilum (strain DSM 24528 / JCM 14929 / IAM 14863 / T).